The primary structure comprises 306 residues: Uricase (306 aa).

Residues lysine 5 and threonine 65 each act as charge relay system in the active site. Urate-binding residues include threonine 65, aspartate 66, phenylalanine 175, arginine 192, isoleucine 240, glutamine 241, and asparagine 267. The interval 281 to 306 (AKVLREPPRPTGYQQFSMDRSDLEEQ) is disordered.

Belongs to the uricase family.

It catalyses the reaction urate + O2 + H2O = 5-hydroxyisourate + H2O2. It participates in purine metabolism; urate degradation; (S)-allantoin from urate: step 1/3. Its function is as follows. Catalyzes the oxidation of uric acid to 5-hydroxyisourate, which is further processed to form (S)-allantoin. The chain is Uricase from Halalkalicoccus jeotgali (strain DSM 18796 / CECT 7217 / JCM 14584 / KCTC 4019 / B3).